Reading from the N-terminus, the 517-residue chain is DNA-directed RNA polymerase subunit alpha (517 aa).

It belongs to the RNA polymerase alpha chain family. In plastids the minimal PEP RNA polymerase catalytic core is composed of four subunits: alpha, beta, beta', and beta''. When a (nuclear-encoded) sigma factor is associated with the core the holoenzyme is formed, which can initiate transcription.

The protein localises to the plastid. It localises to the chloroplast. The enzyme catalyses RNA(n) + a ribonucleoside 5'-triphosphate = RNA(n+1) + diphosphate. Its function is as follows. DNA-dependent RNA polymerase catalyzes the transcription of DNA into RNA using the four ribonucleoside triphosphates as substrates. The polypeptide is DNA-directed RNA polymerase subunit alpha (rpoA) (Stigeoclonium helveticum (Green alga)).